The primary structure comprises 586 residues: Eukaryotic translation initiation factor 3 subunit D (586 aa).

The segment at 107-154 is disordered; it reads FGRGGGTVFRGRAQRGGAGQRGGRAGFQRVGAGRGQGGDRYYDNRGAR. Over residues 108–131 the composition is skewed to gly residues; it reads GRGGGTVFRGRAQRGGAGQRGGRA. The RNA gate stretch occupies residues 301-315; it reads SLDLVTVNENAADAP. Positions 566–577 are enriched in acidic residues; the sequence is FEEDDEAAEEEQ. The disordered stretch occupies residues 566 to 586; sequence FEEDDEAAEEEQEAKGEVEEA.

This sequence belongs to the eIF-3 subunit D family. In terms of assembly, component of the eukaryotic translation initiation factor 3 (eIF-3) complex.

It localises to the cytoplasm. Its function is as follows. mRNA cap-binding component of the eukaryotic translation initiation factor 3 (eIF-3) complex, which is involved in protein synthesis of a specialized repertoire of mRNAs and, together with other initiation factors, stimulates binding of mRNA and methionyl-tRNAi to the 40S ribosome. The eIF-3 complex specifically targets and initiates translation of a subset of mRNAs involved in cell proliferation. In the eIF-3 complex, eif3d specifically recognizes and binds the 7-methylguanosine cap of a subset of mRNAs. In Emericella nidulans (strain FGSC A4 / ATCC 38163 / CBS 112.46 / NRRL 194 / M139) (Aspergillus nidulans), this protein is Eukaryotic translation initiation factor 3 subunit D.